A 274-amino-acid chain; its full sequence is Pyrroline-5-carboxylate reductase 3 (274 aa).

A2 carries the N-acetylalanine modification.

It belongs to the pyrroline-5-carboxylate reductase family. As to quaternary structure, homodecamer; composed of 5 homodimers.

It is found in the cytoplasm. It catalyses the reaction L-proline + NADP(+) = (S)-1-pyrroline-5-carboxylate + NADPH + 2 H(+). The enzyme catalyses L-proline + NAD(+) = (S)-1-pyrroline-5-carboxylate + NADH + 2 H(+). It functions in the pathway amino-acid biosynthesis; L-proline biosynthesis; L-proline from L-glutamate 5-semialdehyde: step 1/1. Its function is as follows. Oxidoreductase that catalyzes the last step in proline biosynthesis, which corresponds to the reduction of pyrroline-5-carboxylate (P5C) to L-proline using NAD(P)H. Proline is synthesized from either glutamate or ornithine; both are converted to P5C, and then to proline via pyrroline-5-carboxylate reductases (PYCRs). PYCR3 is exclusively linked to the biosynthesis of proline from ornithine. The protein is Pyrroline-5-carboxylate reductase 3 of Mus musculus (Mouse).